The chain runs to 116 residues: Large ribosomal subunit protein bL19 (116 aa).

The protein belongs to the bacterial ribosomal protein bL19 family.

Functionally, this protein is located at the 30S-50S ribosomal subunit interface and may play a role in the structure and function of the aminoacyl-tRNA binding site. This Solidesulfovibrio magneticus (strain ATCC 700980 / DSM 13731 / RS-1) (Desulfovibrio magneticus) protein is Large ribosomal subunit protein bL19.